An 865-amino-acid polypeptide reads, in one-letter code: Nitrogen regulatory protein nrfA (865 aa).

Disordered stretches follow at residues 1–75 (MEGI…DEMQ), 115–140 (RKEREQQEREQQARASETVSPAPSGI), 177–227 (FDSP…QDQR), 557–605 (GSTD…RTAS), and 617–663 (LNGS…AGPT). The span at 32-46 (DDFTFDSPFSSSGSS) shows a compositional bias: low complexity. 2 stretches are compositionally biased toward basic and acidic residues: residues 115-126 (RKEREQQEREQQ) and 180-189 (PAEHPSHPSA). A compositionally biased stretch (polar residues) spans 582 to 592 (ASVSDVRNQNQ). The GATA-type zinc-finger motif lies at 665–689 (CTNCFTQTTPLWRRNPEGQPLCNAC). The segment at 713–854 (NRSSANTLAV…NHSIAGGQGA (142 aa)) is disordered. Polar residues-rich tracts occupy residues 715–724 (SSANTLAVGT) and 737–764 (IQHAPSTSISSRINTSESPPSMTGSNTL). 2 stretches are compositionally biased toward low complexity: residues 771–786 (PIAAAPPKSGPPAGVA) and 830–844 (PLAPAMAPPAAANPA).

The protein localises to the nucleus. Major nitrogen regulatory protein. In Penicillium urticae, this protein is Nitrogen regulatory protein nrfA (nrfA).